A 270-amino-acid polypeptide reads, in one-letter code: 3-phenylpropionate-dihydrodiol/cinnamic acid-dihydrodiol dehydrogenase (270 aa).

10–34 (FITGGGSGLGLALVERFIEEGAQVA) contributes to the NAD(+) binding site. Substrate is bound at residue S143. The active-site Proton acceptor is the Y156.

Belongs to the short-chain dehydrogenases/reductases (SDR) family.

The catalysed reaction is 3-(cis-5,6-dihydroxycyclohexa-1,3-dien-1-yl)propanoate + NAD(+) = 3-(2,3-dihydroxyphenyl)propanoate + NADH + H(+). It catalyses the reaction (2E)-3-(cis-5,6-dihydroxycyclohexa-1,3-dien-1-yl)prop-2-enoate + NAD(+) = (2E)-3-(2,3-dihydroxyphenyl)prop-2-enoate + NADH + H(+). The protein operates within aromatic compound metabolism; 3-phenylpropanoate degradation. Converts 3-phenylpropionate-dihydrodiol (PP-dihydrodiol) and cinnamic acid-dihydrodiol (CI-dihydrodiol) into 3-(2,3-dihydroxylphenyl)propanoic acid (DHPP) and 2,3-dihydroxicinnamic acid (DHCI), respectively. The polypeptide is 3-phenylpropionate-dihydrodiol/cinnamic acid-dihydrodiol dehydrogenase (Escherichia coli (strain SMS-3-5 / SECEC)).